The following is a 349-amino-acid chain: MTATASASSVSGSLGRNELPPHLDENLLTPRFYTTEFDKAAKTDLEIARRDFQAMFNEMEADYNLKHFDRKASLARLNELSPKDKSVYESYLVRSVVSEFSGFLLFKEISNRFKKAKRPELGQFFQFLARDEARHAGFLGRALKEEGINIDLPNLPKKRAATFFPLSWVLYSLYLSEKIGYWRYILINRHLKAHPDKACAPLFDFFEPWCQDENRHGDCINMMMRCWPGMTKGFRGKILSRFFLWTVFLTHTLTVCERGDFYELLAIDPVKFDEEVIIQTNNTSKNAFPWVYNFEDGRFLEMRKEILNAFRSWRKASKLSKPIHFLKFVSLIARQFALPMEKTQAVRYS.

The segment at methionine 1–histidine 22 is disordered.

This sequence belongs to the AcsF family. It depends on Fe cation as a cofactor.

The enzyme catalyses Mg-protoporphyrin IX 13-monomethyl ester + 3 NADPH + 3 O2 + 2 H(+) = 3,8-divinyl protochlorophyllide a + 3 NADP(+) + 5 H2O. It functions in the pathway porphyrin-containing compound metabolism; chlorophyll biosynthesis (light-independent). Functionally, catalyzes the formation of the isocyclic ring in chlorophyll biosynthesis. Mediates the cyclase reaction, which results in the formation of divinylprotochlorophyllide (Pchlide) characteristic of all chlorophylls from magnesium-protoporphyrin IX 13-monomethyl ester (MgPMME). The sequence is that of Magnesium-protoporphyrin IX monomethyl ester [oxidative] cyclase from Prochlorococcus marinus (strain MIT 9211).